We begin with the raw amino-acid sequence, 706 residues long: Triadin (706 aa).

The tract at residues 1-28 (MTEITAEGNASTTTTVIDSKNGSVPKSP) is disordered. At 1–47 (MTEITAEGNASTTTTVIDSKNGSVPKSPGKVLKRTVTEDLVTTFSSP) the chain is on the cytoplasmic side. Positions 8-24 (GNASTTTTVIDSKNGSV) are enriched in polar residues. Residues 48–68 (AAWLLVIALIITWSAVAVVMF) form a helical membrane-spanning segment. The Lumenal segment spans residues 69–706 (DLVDYKNFSA…GKPNSPGPKQ (638 aa)). N75 carries an N-linked (GlcNAc...) asparagine glycan. Residues 117–127 (DGDEEDDEGDE) show a composition bias toward acidic residues. Disordered regions lie at residues 117–265 (DGDE…EQKD), 281–663 (DLKP…KKQK), and 684–706 (FPVT…GPKQ). Composition is skewed to basic and acidic residues over residues 128–254 (DTAK…ESKE), 309–358 (PEEK…KSPD), 372–432 (TKKD…KEEV), 443–518 (AKKE…EVKP), 525–552 (IKKE…EKVL), 570–588 (KKAE…DKPK), and 599–621 (ESGK…RESH). N625 carries an N-linked (GlcNAc...) asparagine glycan. Positions 628–651 (KAEKPARGSKEGFEDVPASKKAKE) are enriched in basic and acidic residues.

Interacts with CASQ2. Homooligomer of variable subunit number; disulfide-linked. Interacts with CASQ1 and RYR1 in skeletal muscle. Phosphorylated by CaMK2. In terms of processing, N-glycosylated. In terms of tissue distribution, detected in skeletal muscle and in heart (at protein level). Detected in skeletal muscle and in heart.

It localises to the sarcoplasmic reticulum membrane. Contributes to the regulation of lumenal Ca2+ release via the sarcoplasmic reticulum calcium release channels RYR1 and RYR2, a key step in triggering skeletal and heart muscle contraction. Required for normal organization of the triad junction, where T-tubules and the sarcoplasmic reticulum terminal cisternae are in close contact. Required for normal skeletal muscle strength. Plays a role in excitation-contraction coupling in the heart and in regulating the rate of heart beats. The polypeptide is Triadin (TRDN) (Oryctolagus cuniculus (Rabbit)).